The primary structure comprises 363 residues: Ribosomal RNA large subunit methyltransferase M (363 aa).

S-adenosyl-L-methionine is bound by residues serine 194, 227–230, aspartate 246, aspartate 266, and aspartate 284; that span reads CPGG. Catalysis depends on lysine 313, which acts as the Proton acceptor.

The protein belongs to the class I-like SAM-binding methyltransferase superfamily. RNA methyltransferase RlmE family. RlmM subfamily. Monomer.

Its subcellular location is the cytoplasm. The enzyme catalyses cytidine(2498) in 23S rRNA + S-adenosyl-L-methionine = 2'-O-methylcytidine(2498) in 23S rRNA + S-adenosyl-L-homocysteine + H(+). Functionally, catalyzes the 2'-O-methylation at nucleotide C2498 in 23S rRNA. The chain is Ribosomal RNA large subunit methyltransferase M from Haemophilus influenzae (strain ATCC 51907 / DSM 11121 / KW20 / Rd).